A 115-amino-acid polypeptide reads, in one-letter code: Tyrosine-protein phosphatase 18 (115 aa).

Residues 1-115 enclose the Tyrosine-protein phosphatase domain; the sequence is WLMIVEQKCR…ETGSDAPMVV (115 aa). Asp83 is a substrate binding site.

Belongs to the protein-tyrosine phosphatase family.

It carries out the reaction O-phospho-L-tyrosyl-[protein] + H2O = L-tyrosyl-[protein] + phosphate. This Styela plicata (Wrinkled sea squirt) protein is Tyrosine-protein phosphatase 18 (STY-18).